Here is a 381-residue protein sequence, read N- to C-terminus: UDP-N-acetylglucosamine--N-acetylmuramyl-(pentapeptide) pyrophosphoryl-undecaprenol N-acetylglucosamine transferase (381 aa).

UDP-N-acetyl-alpha-D-glucosamine-binding positions include 10 to 12, N124, R165, S207, I263, and Q308; that span reads TGG.

It belongs to the glycosyltransferase 28 family. MurG subfamily.

The protein resides in the cell inner membrane. It carries out the reaction di-trans,octa-cis-undecaprenyl diphospho-N-acetyl-alpha-D-muramoyl-L-alanyl-D-glutamyl-meso-2,6-diaminopimeloyl-D-alanyl-D-alanine + UDP-N-acetyl-alpha-D-glucosamine = di-trans,octa-cis-undecaprenyl diphospho-[N-acetyl-alpha-D-glucosaminyl-(1-&gt;4)]-N-acetyl-alpha-D-muramoyl-L-alanyl-D-glutamyl-meso-2,6-diaminopimeloyl-D-alanyl-D-alanine + UDP + H(+). It participates in cell wall biogenesis; peptidoglycan biosynthesis. In terms of biological role, cell wall formation. Catalyzes the transfer of a GlcNAc subunit on undecaprenyl-pyrophosphoryl-MurNAc-pentapeptide (lipid intermediate I) to form undecaprenyl-pyrophosphoryl-MurNAc-(pentapeptide)GlcNAc (lipid intermediate II). The chain is UDP-N-acetylglucosamine--N-acetylmuramyl-(pentapeptide) pyrophosphoryl-undecaprenol N-acetylglucosamine transferase from Trichlorobacter lovleyi (strain ATCC BAA-1151 / DSM 17278 / SZ) (Geobacter lovleyi).